We begin with the raw amino-acid sequence, 666 residues long: Probable potassium transport system protein Kup (666 aa).

Transmembrane regions (helical) follow at residues 16–36, 58–78, 99–119, 141–161, 167–187, 221–241, 253–273, 292–312, 343–363, 373–393, 402–422, and 424–444; these read GFII…LYTM, ISLI…LVAL, TPWL…DGAL, IFQN…LLFA, TGVI…FLGI, IFIL…YSDL, WPFV…WILA, FTMH…QALI, TYIP…VLLF, YGLA…FFLI, VLLM…ASAV, and FMHG…IMTI.

It belongs to the HAK/KUP transporter (TC 2.A.72) family.

It is found in the cell membrane. The catalysed reaction is K(+)(in) + H(+)(in) = K(+)(out) + H(+)(out). Transport of potassium into the cell. Likely operates as a K(+):H(+) symporter. The sequence is that of Probable potassium transport system protein Kup from Streptococcus agalactiae serotype V (strain ATCC BAA-611 / 2603 V/R).